A 119-amino-acid chain; its full sequence is Protein TusC (119 aa).

The protein belongs to the DsrF/TusC family. In terms of assembly, heterohexamer, formed by a dimer of trimers. The hexameric TusBCD complex contains 2 copies each of TusB, TusC and TusD. The TusBCD complex interacts with TusE.

The protein localises to the cytoplasm. Part of a sulfur-relay system required for 2-thiolation of 5-methylaminomethyl-2-thiouridine (mnm(5)s(2)U) at tRNA wobble positions. This chain is Protein TusC, found in Escherichia coli O45:K1 (strain S88 / ExPEC).